The sequence spans 242 residues: Biosynthetic peptidoglycan transglycosylase (242 aa).

A helical transmembrane segment spans residues 19-39 (ILVVLAVFWGGGIALFSVVPV).

This sequence belongs to the glycosyltransferase 51 family.

Its subcellular location is the cell inner membrane. It carries out the reaction [GlcNAc-(1-&gt;4)-Mur2Ac(oyl-L-Ala-gamma-D-Glu-L-Lys-D-Ala-D-Ala)](n)-di-trans,octa-cis-undecaprenyl diphosphate + beta-D-GlcNAc-(1-&gt;4)-Mur2Ac(oyl-L-Ala-gamma-D-Glu-L-Lys-D-Ala-D-Ala)-di-trans,octa-cis-undecaprenyl diphosphate = [GlcNAc-(1-&gt;4)-Mur2Ac(oyl-L-Ala-gamma-D-Glu-L-Lys-D-Ala-D-Ala)](n+1)-di-trans,octa-cis-undecaprenyl diphosphate + di-trans,octa-cis-undecaprenyl diphosphate + H(+). The protein operates within cell wall biogenesis; peptidoglycan biosynthesis. In terms of biological role, peptidoglycan polymerase that catalyzes glycan chain elongation from lipid-linked precursors. The polypeptide is Biosynthetic peptidoglycan transglycosylase (Citrobacter koseri (strain ATCC BAA-895 / CDC 4225-83 / SGSC4696)).